The following is a 204-amino-acid chain: MVCGESNAAAISAKYVDNDPLQRPAARATPANESHICDLMPPKGWKKDAQGNYPTTSYIKEQEKLTVDDLLFPRSIITSLAKDAVHQAVQTAEQDPRVMLSKDASLALQRSSTVFVNHLLMHARQIAQSNDRKSCSGEDVLKALDQIGLAGFESVVRERVVEYEKEVQRRRAEKTPAADEGQAEEGDAADEEEGSHKRAKLDEH.

Residues 165–177 (KEVQRRRAEKTPA) show a composition bias toward basic and acidic residues. The tract at residues 165–204 (KEVQRRRAEKTPAADEGQAEEGDAADEEEGSHKRAKLDEH) is disordered. Over residues 181–193 (GQAEEGDAADEEE) the composition is skewed to acidic residues. The span at 194–204 (GSHKRAKLDEH) shows a compositional bias: basic and acidic residues.

In terms of assembly, heterotetramer. Consists of four subunits: POL2, DPB2, DPB3 and DPB4.

Its subcellular location is the nucleus. Functionally, as accessory component of the DNA polymerase epsilon (DNA polymerase II) participates in chromosomal DNA replication. This chain is DNA polymerase epsilon subunit D (DPB4), found in Eremothecium gossypii (strain ATCC 10895 / CBS 109.51 / FGSC 9923 / NRRL Y-1056) (Yeast).